The primary structure comprises 169 residues: Actin-related protein 2/3 complex subunit 4 (169 aa).

The protein belongs to the ARPC4 family. In terms of assembly, component of the Arp2/3 complex composed of arpB/Arp2, arpC/Arp3, arcA/p41-arc, arcB/p34-arc, arcC/p21-arc, arcD/p20-arc and arcE/p16-arc. Interacts with carmil (via the region between the LRR domain and COOH-terminal proline-rich domain); carmil is required for Arp2/3-dependent actin nucleation. Arp2/3 complex, MyoB, MyoC, and the alpha and beta subunits of capping protein all form a larger complex with carmil.

Its subcellular location is the cytoplasm. The protein localises to the cytoskeleton. It localises to the cytosol. It is found in the cell cortex. The protein resides in the cell projection. Its subcellular location is the pseudopodium. Functions as a component of the Arp2/3 complex which is involved in regulation of actin polymerization and together with an activating nucleation-promoting factor (NPF) mediates the formation of branched actin networks. Seems to contact the pointed end of the daughter actin filament. The Arp2/3 complex is involved in organizing the actin system in cell motility and chemotaxis, in phagocytosis and macropinocytosis, at late steps of endosome processing, and in mitosis. In concert with a group of other proteins, the Arp2/3 complex plays a general role in the rapid activation and adaptation of the actin system to its multiple functions. The protein is Actin-related protein 2/3 complex subunit 4 (arcD) of Dictyostelium discoideum (Social amoeba).